The primary structure comprises 211 residues: MMNQSITPPTHPPMSQRFRGYLPVVVDVETGGFNWNHHALLEIACIPIEMDDTGRLYPGEVTSTHVIPAPGTDIDPKSLEVTGIILDHPFRFAKEEKLALEHIFTPVRATMKKYKCQRAILVGHNAHFDLNFLNAAVTRTAYKRNPFHQFSVFDTVTLAGMAYGQTVLARAVQAAGLDWNAADAHSAVYDAEKTAHLFCTITNTWPLVVAG.

One can recognise an Exonuclease domain in the interval 24-198 (VVVDVETGGF…YDAEKTAHLF (175 aa)). 4 residues coordinate Mg(2+): Asp-27, Glu-29, His-185, and Asp-190. His-185 serves as the catalytic Proton donor/acceptor.

Belongs to the RNase T family. Homodimer. Mg(2+) is required as a cofactor.

Its function is as follows. Trims short 3' overhangs of a variety of RNA species, leaving a one or two nucleotide 3' overhang. Responsible for the end-turnover of tRNA: specifically removes the terminal AMP residue from uncharged tRNA (tRNA-C-C-A). Also appears to be involved in tRNA biosynthesis. This chain is Ribonuclease T, found in Xylella fastidiosa (strain 9a5c).